Reading from the N-terminus, the 127-residue chain is Single-stranded DNA-binding protein 2 (127 aa).

In terms of domain architecture, SSB spans 4 to 103; that stretch reads INKVMLVGRC…ITINTIELLG (100 aa). The interval 104–127 is disordered; that stretch reads SPRKEESTSTSAPNETQAVANANF. The span at 111-127 shows a compositional bias: polar residues; sequence TSTSAPNETQAVANANF.

Homotetramer.

In Nostoc sp. (strain PCC 7120 / SAG 25.82 / UTEX 2576), this protein is Single-stranded DNA-binding protein 2 (ssb2).